The sequence spans 58 residues: Photosystem II reaction center protein K (58 aa).

Positions 1 to 21 are excised as a propeptide; the sequence is MFNAYLDTVLDLSANGTVILA. Residues 29-49 traverse the membrane as a helical segment; sequence IFDPIVDVMPIIPVFFLLLAF.

This sequence belongs to the PsbK family. As to quaternary structure, PSII is composed of 1 copy each of membrane proteins PsbA, PsbB, PsbC, PsbD, PsbE, PsbF, PsbH, PsbI, PsbJ, PsbK, PsbL, PsbM, PsbT, PsbX, PsbY, PsbZ, Psb30/Ycf12, at least 3 peripheral proteins of the oxygen-evolving complex and a large number of cofactors. It forms dimeric complexes.

It localises to the plastid. The protein localises to the chloroplast thylakoid membrane. Its function is as follows. One of the components of the core complex of photosystem II (PSII). PSII is a light-driven water:plastoquinone oxidoreductase that uses light energy to abstract electrons from H(2)O, generating O(2) and a proton gradient subsequently used for ATP formation. It consists of a core antenna complex that captures photons, and an electron transfer chain that converts photonic excitation into a charge separation. The sequence is that of Photosystem II reaction center protein K from Staurastrum punctulatum (Green alga).